Consider the following 193-residue polypeptide: Acyl carrier protein phosphodiesterase (193 aa).

It belongs to the AcpH family.

It catalyses the reaction holo-[ACP] + H2O = apo-[ACP] + (R)-4'-phosphopantetheine + H(+). Functionally, converts holo-ACP to apo-ACP by hydrolytic cleavage of the phosphopantetheine prosthetic group from ACP. The sequence is that of Acyl carrier protein phosphodiesterase from Klebsiella pneumoniae subsp. pneumoniae (strain ATCC 700721 / MGH 78578).